The following is a 599-amino-acid chain: Elongation factor 4 (599 aa).

Residues S5–T187 enclose the tr-type G domain. Residues D17–T22 and N134–D137 each bind GTP.

The protein belongs to the TRAFAC class translation factor GTPase superfamily. Classic translation factor GTPase family. LepA subfamily.

It localises to the cell inner membrane. The catalysed reaction is GTP + H2O = GDP + phosphate + H(+). Required for accurate and efficient protein synthesis under certain stress conditions. May act as a fidelity factor of the translation reaction, by catalyzing a one-codon backward translocation of tRNAs on improperly translocated ribosomes. Back-translocation proceeds from a post-translocation (POST) complex to a pre-translocation (PRE) complex, thus giving elongation factor G a second chance to translocate the tRNAs correctly. Binds to ribosomes in a GTP-dependent manner. The protein is Elongation factor 4 of Cellvibrio japonicus (strain Ueda107) (Pseudomonas fluorescens subsp. cellulosa).